The sequence spans 191 residues: Probable nicotinate-nucleotide adenylyltransferase (191 aa).

It belongs to the NadD family.

The catalysed reaction is nicotinate beta-D-ribonucleotide + ATP + H(+) = deamido-NAD(+) + diphosphate. The protein operates within cofactor biosynthesis; NAD(+) biosynthesis; deamido-NAD(+) from nicotinate D-ribonucleotide: step 1/1. In terms of biological role, catalyzes the reversible adenylation of nicotinate mononucleotide (NaMN) to nicotinic acid adenine dinucleotide (NaAD). The chain is Probable nicotinate-nucleotide adenylyltransferase from Staphylococcus epidermidis (strain ATCC 12228 / FDA PCI 1200).